The following is a 274-amino-acid chain: Cytochrome b-c1 complex subunit Rieske, mitochondrial (274 aa).

The Mitochondrial matrix portion of the chain corresponds to 79–110 (SHTDVKVPDFSDYRRAEVLDSTKSSKESSEAR). A helical membrane pass occupies residues 111–137 (KGFSYLVTATTTVGVAYAAKNVVSQFV). Residues 138–274 (SSMSASADVL…FTSDDVVVVG (137 aa)) lie on the Mitochondrial intermembrane side of the membrane. One can recognise a Rieske domain in the interval 187–272 (EAAVEVSQLR…YEFTSDDVVV (86 aa)). [2Fe-2S] cluster is bound by residues Cys217, His219, Cys236, His239, and Ser241. A disulfide bridge links Cys222 with Cys238.

The protein belongs to the Rieske iron-sulfur protein family. As to quaternary structure, component of the ubiquinol-cytochrome c oxidoreductase (cytochrome b-c1 complex, complex III, CIII), a multisubunit enzyme composed of 11 subunits. The complex is composed of 3 respiratory subunits cytochrome b, cytochrome c1 and Rieske protein UQCRFS1, 2 core protein subunits UQCRC1/QCR1 and UQCRC2/QCR2, and 6 low-molecular weight protein subunits UQCRH/QCR6, UQCRB/QCR7, UQCRQ/QCR8, UQCR10/QCR9, UQCR11/QCR10 and subunit 9, the cleavage product of Rieske protein UQCRFS1. The complex exists as an obligatory dimer and forms supercomplexes (SCs) in the inner mitochondrial membrane with NADH-ubiquinone oxidoreductase (complex I, CI) and cytochrome c oxidase (complex IV, CIV), resulting in different assemblies (supercomplex SCI(1)III(2)IV(1) and megacomplex MCI(2)III(2)IV(2)). Incorporation of the Rieske protein UQCRFS1 is the penultimate step in complex III assembly. Interacts with TTC19, which is involved in the clearance of UQCRFS1 fragments. Component of the ubiquinol-cytochrome c oxidoreductase (cytochrome b-c1 complex, complex III, CIII). Subunit 9 corresponds to the mitochondrial targeting sequence (MTS) of Rieske protein UQCRFS1. It is retained after processing and incorporated inside complex III, where it remains bound to the complex and localizes between the 2 core subunits UQCRC1/QCR1 and UQCRC2/QCR2. [2Fe-2S] cluster is required as a cofactor. Post-translationally, proteolytic processing is necessary for the correct insertion of UQCRFS1 in the complex III dimer. Several fragments are generated during UQCRFS1 insertion, most probably due to the endogenous matrix-processing peptidase (MPP) activity of the 2 core protein subunits UQCRC1/QCR1 and UQCRC2/QCR2, which are homologous to the 2 mitochondrial-processing peptidase (MPP) subunits beta-MPP and alpha-MPP respectively. The action of the protease is also necessary for the clearance of the UQCRFS1 fragments.

It localises to the mitochondrion inner membrane. The enzyme catalyses a quinol + 2 Fe(III)-[cytochrome c](out) = a quinone + 2 Fe(II)-[cytochrome c](out) + 2 H(+)(out). Functionally, component of the ubiquinol-cytochrome c oxidoreductase, a multisubunit transmembrane complex that is part of the mitochondrial electron transport chain which drives oxidative phosphorylation. The respiratory chain contains 3 multisubunit complexes succinate dehydrogenase (complex II, CII), ubiquinol-cytochrome c oxidoreductase (cytochrome b-c1 complex, complex III, CIII) and cytochrome c oxidase (complex IV, CIV), that cooperate to transfer electrons derived from NADH and succinate to molecular oxygen, creating an electrochemical gradient over the inner membrane that drives transmembrane transport and the ATP synthase. The cytochrome b-c1 complex catalyzes electron transfer from ubiquinol to cytochrome c, linking this redox reaction to translocation of protons across the mitochondrial inner membrane, with protons being carried across the membrane as hydrogens on the quinol. In the process called Q cycle, 2 protons are consumed from the matrix, 4 protons are released into the intermembrane space and 2 electrons are passed to cytochrome c. The Rieske protein is a catalytic core subunit containing a [2Fe-2S] iron-sulfur cluster. It cycles between 2 conformational states during catalysis to transfer electrons from the quinol bound in the Q(0) site in cytochrome b to cytochrome c1. Incorporation of UQCRFS1 is the penultimate step in complex III assembly. Component of the ubiquinol-cytochrome c oxidoreductase (cytochrome b-c1 complex, complex III, CIII). UQCRFS1 undergoes proteolytic processing once it is incorporated in the complex III dimer. One of the fragments, called subunit 9, corresponds to its mitochondrial targeting sequence (MTS). The proteolytic processing is necessary for the correct insertion of UQCRFS1 in the complex III dimer, but the persistence of UQCRFS1-derived fragments may prevent newly imported UQCRFS1 to be processed and assembled into complex III and is detrimental for the complex III structure and function. This is Cytochrome b-c1 complex subunit Rieske, mitochondrial from Mus musculus (Mouse).